The chain runs to 418 residues: Lactosylceramide alpha-2,3-sialyltransferase (418 aa).

The interval 1-25 is disordered; that stretch reads MRTKAAGCAERRPLQPRTEAAAAPA. At 1-61 the chain is on the cytoplasmic side; it reads MRTKAAGCAE…RAQSKMRRPS (61 aa). The helical; Signal-anchor for type II membrane protein transmembrane segment at 62 to 82 threads the bilayer; the sequence is LLLKDILKCTLLVFGVWILYI. The Lumenal segment spans residues 83–418; sequence LKLNYTTEEC…DLSGGIDREF (336 aa). Residues Asn86, Asn236, and Asn390 are each glycosylated (N-linked (GlcNAc...) asparagine). A disulfide bridge links Cys195 with Cys353.

This sequence belongs to the glycosyltransferase 29 family. Post-translationally, N-glycosylated. Ubiquitous. High expression in brain, skeletal muscle, placenta, and testis. mRNA widely distributed in human brain, but slightly elevated expression was observed in the cerebral cortex, temporal lobe, and putamen.

It localises to the golgi apparatus membrane. It catalyses the reaction a beta-D-Gal-(1-&gt;4)-beta-D-Glc-(1&lt;-&gt;1)-Cer(d18:1(4E)) + CMP-N-acetyl-beta-neuraminate = a ganglioside GM3 (d18:1(4E)) + CMP + H(+). The catalysed reaction is ganglioside GA2 (d18:1(4E)/18:0) + CMP-N-acetyl-beta-neuraminate = ganglioside GM2 (d18:1(4E)/18:0) + CMP + H(+). It carries out the reaction a beta-D-Gal-(1&lt;-&gt;1')-ceramide + CMP-N-acetyl-beta-neuraminate = N-acetyl-alpha-neuraminosyl-(2-&gt;3)-beta-D-galactosyl-(1&lt;-&gt;1')-ceramide + CMP + H(+). The enzyme catalyses a beta-D-galactosyl-(1&lt;-&gt;1')-N-acylsphing-4-enine + CMP-N-acetyl-beta-neuraminate = a ganglioside GM4 (d18:1(4E)) + CMP + H(+). It catalyses the reaction ganglioside GA1 (d18:1(4E)/18:0) + CMP-N-acetyl-beta-neuraminate = ganglioside GM1 (d18:1(4E)/18:0) + CMP + H(+). Its pathway is glycolipid biosynthesis. In terms of biological role, transfers the sialyl group (N-acetyl-alpha-neuraminyl or NeuAc) from CMP-NeuAc to the non-reducing terminal galactose (Gal) of glycosphingolipids forming gangliosides (important molecules involved in the regulation of multiple cellular processes, including cell proliferation and differentiation, apoptosis, embryogenesis, development, and oncogenesis). Mainly involved in the biosynthesis of ganglioside GM3 but can also use different glycolipids as substrate acceptors such as D-galactosylceramide (GalCer), asialo-GM2 (GA2) and asialo-GM1 (GA1), although less preferentially than beta-D-Gal-(1-&gt;4)-beta-D-Glc-(1&lt;-&gt;1)-Cer (LacCer). This Homo sapiens (Human) protein is Lactosylceramide alpha-2,3-sialyltransferase (ST3GAL5).